Here is a 203-residue protein sequence, read N- to C-terminus: uncharacterized protein (203 aa).

The next 4 membrane-spanning stretches (helical) occupy residues 9–29 (YNVF…IVVA), 42–62 (FLFL…FFDV), 86–106 (SGVF…ALLV), and 126–146 (YPLL…SIGL). 2 stretches are compositionally biased toward basic and acidic residues: residues 164 to 174 (GEPTAADKTDS) and 182 to 191 (DQTKSKKDGD). The disordered stretch occupies residues 164–203 (GEPTAADKTDSRPVVVDLDQTKSKKDGDNPPQASGDMTSL). A compositionally biased stretch (polar residues) spans 194–203 (PQASGDMTSL).

The protein localises to the cell membrane. This is an uncharacterized protein from Mycoplasma pneumoniae (strain ATCC 29342 / M129 / Subtype 1) (Mycoplasmoides pneumoniae).